We begin with the raw amino-acid sequence, 617 residues long: BTB/POZ domain-containing protein At3g08570 (617 aa).

The BTB domain maps to 36–106 (GDITIVVDGE…CYGINFEITI (71 aa)). One can recognise an NPH3 domain in the interval 210 to 490 (EWWIEDLSAL…VRVLYSEQLR (281 aa)). The residue at position 431 (tyrosine 431) is a Phosphotyrosine. Disordered regions lie at residues 505–525 (LSSQKHSSENPSRAVSPRDTY) and 585–617 (GGGPTEGKLRNANRKSKSRLERKTVRSRPESMF). A compositionally biased stretch (basic and acidic residues) spans 602–617 (SRLERKTVRSRPESMF).

It belongs to the NPH3 family.

Its pathway is protein modification; protein ubiquitination. May act as a substrate-specific adapter of an E3 ubiquitin-protein ligase complex (CUL3-RBX1-BTB) which mediates the ubiquitination and subsequent proteasomal degradation of target proteins. This chain is BTB/POZ domain-containing protein At3g08570, found in Arabidopsis thaliana (Mouse-ear cress).